Consider the following 91-residue polypeptide: Late embryogenesis abundant protein EMB564 (91 aa).

2 stretches are compositionally biased toward basic and acidic residues: residues Met-1–Glu-19 and Glu-32–Gln-51. Residues Met-1–Lys-91 are disordered.

The protein belongs to the small hydrophilic plant seed protein family.

Its function is as follows. LEA proteins are late embryonic proteins abundant in higher plant seed embryos. They may play an essential role in seed survival and in controlling water exchanges during seed desiccation and imbibition. The sequence is that of Late embryogenesis abundant protein EMB564 from Zea mays (Maize).